The chain runs to 100 residues: MEARDIILRPIVTEQSMAEMDNRKYTFEVALHATKPQVRKAVEEIFGVKVVNVNIANVRGKKKRQGRYEGMTRRRRKALIALSADSKEIKIFADEDNDKK.

The protein belongs to the universal ribosomal protein uL23 family. In terms of assembly, part of the 50S ribosomal subunit. Contacts protein L29, and trigger factor when it is bound to the ribosome.

One of the early assembly proteins it binds 23S rRNA. One of the proteins that surrounds the polypeptide exit tunnel on the outside of the ribosome. Forms the main docking site for trigger factor binding to the ribosome. The protein is Large ribosomal subunit protein uL23 of Lacticaseibacillus casei (strain BL23) (Lactobacillus casei).